The primary structure comprises 376 residues: UDP-N-acetylglucosamine--N-acetylmuramyl-(pentapeptide) pyrophosphoryl-undecaprenol N-acetylglucosamine transferase (376 aa).

UDP-N-acetyl-alpha-D-glucosamine-binding positions include 11 to 13 (TGG), Asn-117, Arg-160, Ser-208, and Gln-310.

Belongs to the glycosyltransferase 28 family. MurG subfamily.

It is found in the cell inner membrane. The enzyme catalyses di-trans,octa-cis-undecaprenyl diphospho-N-acetyl-alpha-D-muramoyl-L-alanyl-D-glutamyl-meso-2,6-diaminopimeloyl-D-alanyl-D-alanine + UDP-N-acetyl-alpha-D-glucosamine = di-trans,octa-cis-undecaprenyl diphospho-[N-acetyl-alpha-D-glucosaminyl-(1-&gt;4)]-N-acetyl-alpha-D-muramoyl-L-alanyl-D-glutamyl-meso-2,6-diaminopimeloyl-D-alanyl-D-alanine + UDP + H(+). Its pathway is cell wall biogenesis; peptidoglycan biosynthesis. Functionally, cell wall formation. Catalyzes the transfer of a GlcNAc subunit on undecaprenyl-pyrophosphoryl-MurNAc-pentapeptide (lipid intermediate I) to form undecaprenyl-pyrophosphoryl-MurNAc-(pentapeptide)GlcNAc (lipid intermediate II). This chain is UDP-N-acetylglucosamine--N-acetylmuramyl-(pentapeptide) pyrophosphoryl-undecaprenol N-acetylglucosamine transferase, found in Rickettsia peacockii (strain Rustic).